We begin with the raw amino-acid sequence, 329 residues long: Sulfate-binding protein (329 aa).

An N-terminal signal peptide occupies residues 1 to 19 (MNKWGVGLTFLLAATSVMA).

Belongs to the prokaryotic sulfate-binding protein family.

The protein resides in the periplasm. Its function is as follows. This protein specifically binds sulfate and is involved in its transmembrane transport. The sequence is that of Sulfate-binding protein (sbp) from Escherichia coli (strain K12).